The sequence spans 487 residues: MAPVVTGKFGERPPPKRLTREAMRNYLKERGDQTVLILHAKVAQKSYGNEKRFFCPPPCVYLMGSGWKKKKEQMERDGCSEQESQPCAFIGIGNSDQEMQQLNLEGKNYCTAKTLYISDSDKRKHFMLSVKMFYGNSDDIGVFLSKRIKVISKPSKKKQSLKNADLCIASGTKVALFNRLRSQTVSTRYLHVEGGNFHASSQQWGAFYIHLLDDDESEGEEFTVRDGYIHYGQTVKLVCSVTGMALPRLIIRKVDKQTALLDADDPVSQLHKCAFYLKDTERMYLCLSQERIIQFQATPCPKEPNKEMINDGASWTIISTDKAEYTFYEGMGPVLAPVTPVPVVESLQLNGGGDVAMLELTGQNFTPNLRVWFGDVEAETMYRCGESMLCVVPDISAFREGWRWVRQPVQVPVTLVRNDGIIYSTSLTFTYTPEPGPRPHCSAAGAILRANSSQVPPNESNTNSEGSYTNVSTNSTSVTSSTATVVS.

DNA-binding stretches follow at residues Gln44–Phe54 and Ser152–Lys157. An N6-acetyllysine modification is found at Lys162. The interval Arg179–Thr184 is DNA-binding. Residues Pro342–Thr432 enclose the IPT/TIG domain. Over residues Ser452–Tyr468 the composition is skewed to polar residues. The tract at residues Ser452–Ser487 is disordered. A compositionally biased stretch (low complexity) spans Thr469–Ser487.

This sequence belongs to the Su(H) family. In terms of assembly, interacts with activated NOTCH1, NOTCH2 or NOTCH3. Interacts with MINT/SHARP. This interaction may mediate the recruitment of large corepressor complexes containing proteins such as HDAC1, HDAC2, NCOR2, SAP30, FHL1/KYOT2 and CIR1. Interacts with EP300, MAML1 and PTF1A. Interacts with RITA1, leading to nuclear export, prevent the interaction between RBPJ and NICD product and subsequent down-regulation of the Notch signaling pathway. Interacts with SNW1. Interacts with CHCHD2 and CXXC5. Interacts with BEND6 (via BEN domain). Interacts with NKAPL. Interacts with ZMIZ1. Interacts with RBM15. Interacts with L3MBTL3 and KDM1A; the interaction with KDM1A is weaker in the absence of L3MBTL3 and the interaction with L3MBTL3 is impaired by Notch-derived peptides containing the intracellular domain (NICD).

It localises to the nucleus. It is found in the cytoplasm. Transcriptional regulator that plays a central role in Notch signaling, a signaling pathway involved in cell-cell communication that regulates a broad spectrum of cell-fate determinations. Acts as a transcriptional repressor when it is not associated with Notch proteins. When associated with some NICD product of Notch proteins (Notch intracellular domain), it acts as a transcriptional activator that activates transcription of Notch target genes. Probably represses or activates transcription via the recruitment of chromatin remodeling complexes containing histone deacetylase or histone acetylase proteins, respectively. Specifically binds to the immunoglobulin kappa-type J segment recombination signal sequence. Binds specifically to methylated DNA. Binds to the oxygen responsive element of COX4I2 and activates its transcription under hypoxia conditions (4% oxygen). Negatively regulates the phagocyte oxidative burst in response to bacterial infection by repressing transcription of NADPH oxidase subunits. This chain is Recombining binding protein suppressor of hairless (RBPJ), found in Bos taurus (Bovine).